Here is a 1041-residue protein sequence, read N- to C-terminus: Nuclear migration protein unc-83 (1041 aa).

3 disordered regions span residues 258–283 (VGHL…TETV), 453–498 (IHGQ…LEDD), and 613–646 (IRNR…DSIS). Residues 456 to 465 (QKKPLRRASR) are compositionally biased toward basic residues. The span at 613-626 (IRNRDSDTAPEHSD) shows a compositional bias: basic and acidic residues. Coiled-coil stretches lie at residues 785-816 (RSKE…DLLA) and 931-951 (KAEL…FNDM). A KASH domain is found at 986–1041 (TENEPLTIAEAISSSRLIKFTFALSLLAALAAIFYYHVFGKPFGPHVTYVNGPPPV). A helical; Anchor for type IV membrane protein transmembrane segment spans residues 1005-1024 (FTFALSLLAALAAIFYYHVF).

As to quaternary structure, component of the unc-83-unc-84 LINC complex which contains at least unc-83 and unc-84. Within the unc-83-unc-84 LINC complex interacts with unc-84 (via C-terminus); the interaction is probably required to recruit unc-83 to the nuclear envelope where it then recruits dynein and kinesin-1 complexes to regulate nuclear migration. Interacts with bicd-1 and dlc-1. Interacts with nud-2 (via C-terminus); the interaction is direct, and is required for recruitment of nud-2 to the nuclear envelope. Interacts with klc-2; the interaction is direct. In terms of tissue distribution, predominantly expressed in migratory nuclei. Expressed in a variety of cell-types, including cells around the pharynx and in the uterus.

The protein resides in the nucleus membrane. It is found in the nucleus outer membrane. Its function is as follows. Cargo-specific adapter that is involved in nuclear migration during development and thereafter. Component of the unc-83-unc-84 LINC (LInker of Nucleoskeleton and Cytoskeleton) complex where it interacts with unc-84 to form a bridge connecting the nuclear envelope to the cytoskeleton which allows for nuclear transport along microtubules. Within the complex, connects the nuclear envelope to the microtubule cytoskeleton through the kinesin-1 light chain protein klc-2 (most likely within the Kinesin 1 motor complex) to regulate nuclear migrations. Moreover, within the complex, also recruits the large microtubule-associated bicd-1-dlc-1-egal-1 and lis-1-nud-2 complexes to the nuclear envelope to regulate both the bidirectional migration of nuclei and the extent of nuclear migrations. Not required for centrosome attachment to the nucleus. The polypeptide is Nuclear migration protein unc-83 (Caenorhabditis elegans).